The following is a 693-amino-acid chain: Elongation factor G (693 aa).

The tr-type G domain maps to 8–282; it reads EKTRNIGIMA…AVIDYLPSPL (275 aa). GTP is bound by residues 17–24, 81–85, and 135–138; these read AHIDAGKT, DTPGH, and NKMD.

The protein belongs to the TRAFAC class translation factor GTPase superfamily. Classic translation factor GTPase family. EF-G/EF-2 subfamily.

Its subcellular location is the cytoplasm. Catalyzes the GTP-dependent ribosomal translocation step during translation elongation. During this step, the ribosome changes from the pre-translocational (PRE) to the post-translocational (POST) state as the newly formed A-site-bound peptidyl-tRNA and P-site-bound deacylated tRNA move to the P and E sites, respectively. Catalyzes the coordinated movement of the two tRNA molecules, the mRNA and conformational changes in the ribosome. This is Elongation factor G from Staphylococcus carnosus (strain TM300).